A 156-amino-acid chain; its full sequence is Small ribosomal subunit protein uS7 (156 aa).

The protein belongs to the universal ribosomal protein uS7 family. In terms of assembly, part of the 30S ribosomal subunit. Contacts proteins S9 and S11.

In terms of biological role, one of the primary rRNA binding proteins, it binds directly to 16S rRNA where it nucleates assembly of the head domain of the 30S subunit. Is located at the subunit interface close to the decoding center, probably blocks exit of the E-site tRNA. This is Small ribosomal subunit protein uS7 from Treponema denticola (strain ATCC 35405 / DSM 14222 / CIP 103919 / JCM 8153 / KCTC 15104).